Reading from the N-terminus, the 681-residue chain is Type VI secretion system spike protein VgrG2 (681 aa).

A disordered region spans residues 284–309; it reads AVAGSGKSNSSALQPGQTFSLTEHPN. Residues 289–309 are compositionally biased toward polar residues; it reads GKSNSSALQPGQTFSLTEHPN.

The protein belongs to the VgrG protein family.

In terms of biological role, part of the type VI secretion system specialized secretion system, which delivers several virulence factors in both prokaryotic and eukaryotic cells during infection. Plays an essential role in bacterial mobility and biofilm formation. This Aeromonas hydrophila protein is Type VI secretion system spike protein VgrG2.